A 287-amino-acid chain; its full sequence is Shikimate dehydrogenase (NADP(+)) (287 aa).

Residues 20–22 and Thr-67 contribute to the shikimate site; that span reads SRS. Catalysis depends on Lys-71, which acts as the Proton acceptor. Glu-84 contributes to the NADP(+) binding site. The shikimate site is built by Asn-93 and Asp-108. Residues 132–136, 156–161, and Met-226 contribute to the NADP(+) site; these read GAGGA and NRTAAR. Position 228 (Tyr-228) interacts with shikimate. Gly-250 provides a ligand contact to NADP(+).

It belongs to the shikimate dehydrogenase family. Homodimer.

The catalysed reaction is shikimate + NADP(+) = 3-dehydroshikimate + NADPH + H(+). Its pathway is metabolic intermediate biosynthesis; chorismate biosynthesis; chorismate from D-erythrose 4-phosphate and phosphoenolpyruvate: step 4/7. In terms of biological role, involved in the biosynthesis of the chorismate, which leads to the biosynthesis of aromatic amino acids. Catalyzes the reversible NADPH linked reduction of 3-dehydroshikimate (DHSA) to yield shikimate (SA). The chain is Shikimate dehydrogenase (NADP(+)) from Bordetella parapertussis (strain 12822 / ATCC BAA-587 / NCTC 13253).